A 470-amino-acid chain; its full sequence is Histidine--tRNA ligase (470 aa).

The interval 69 to 99 is disordered; the sequence is GIDPILPPNRQAEKDKSGETGKDKSGETGSE. Residues 79-94 are compositionally biased toward basic and acidic residues; it reads QAEKDKSGETGKDKSG.

The protein belongs to the class-II aminoacyl-tRNA synthetase family. Homodimer.

Its subcellular location is the cytoplasm. It carries out the reaction tRNA(His) + L-histidine + ATP = L-histidyl-tRNA(His) + AMP + diphosphate + H(+). This chain is Histidine--tRNA ligase, found in Nostoc punctiforme (strain ATCC 29133 / PCC 73102).